We begin with the raw amino-acid sequence, 319 residues long: Selection and upkeep of intraepithelial T-cells protein 9 (319 aa).

Positions 1–26 (MESSASCLPGFFMSFLLLQNTVLTQA) are cleaved as a signal peptide. An Ig-like V-type domain is found at 27–117 (MRSDIKINIQ…TNQEKKRSIV (91 aa)). Over 27 to 139 (MRSDIKINIQ…LMSNKFSCPS (113 aa)) the chain is Extracellular. A disulfide bridge links C47 with C101. N105 carries N-linked (GlcNAc...) asparagine glycosylation. A helical membrane pass occupies residues 140–160 (IYLITIIFLNFLRGILVFCCL). Residues 161 to 183 (RRKPVCFRNLMSTVMEALYSKMG) are Cytoplasmic-facing. A helical membrane pass occupies residues 184 to 204 (VCCLLIWECLLLVLYIAFLPI). The Extracellular segment spans residues 205–228 (YVSFRSRAFLLDDTYPLYTNWLWN). The helical transmembrane segment at 229 to 249 (ICIILTVIMVLFPGLILCLLW) threads the bilayer. Residues 250–319 (TLNCYGQVSS…DDTASTLFIS (70 aa)) lie on the Cytoplasmic side of the membrane.

This sequence belongs to the SKINT family. In terms of tissue distribution, expressed in skin, thymus and testis.

The protein resides in the membrane. Functionally, may act by engaging a cell surface molecule on immature T-cells in the embryonic thymus. The sequence is that of Selection and upkeep of intraepithelial T-cells protein 9 (Skint9) from Mus musculus (Mouse).